The following is a 513-amino-acid chain: Maturase K (513 aa).

The protein belongs to the intron maturase 2 family. MatK subfamily.

It localises to the plastid. The protein localises to the chloroplast. Usually encoded in the trnK tRNA gene intron. Probably assists in splicing its own and other chloroplast group II introns. The protein is Maturase K of Typha angustifolia (Narrow leaf cattail).